The chain runs to 500 residues: Cytochrome P450 71B35 (500 aa).

The helical transmembrane segment at 1–21 threads the bilayer; it reads MAHIWLLPLIFLVCILLAVFN. Residue cysteine 439 participates in heme binding.

The protein belongs to the cytochrome P450 family. Heme is required as a cofactor.

It localises to the membrane. The sequence is that of Cytochrome P450 71B35 (CYP71B35) from Arabidopsis thaliana (Mouse-ear cress).